Here is a 389-residue protein sequence, read N- to C-terminus: Inner membrane transport protein YdhP (389 aa).

Topologically, residues 1 to 6 (MKINYP) are cytoplasmic. Residues 7–27 (LLALAIGAFGIGTTEFSPMGL) form a helical membrane-spanning segment. Residues 28–43 (LPVIARGVDVSIPAAG) are Periplasmic-facing. A helical transmembrane segment spans residues 44–64 (MLISAYAVGVMVGAPLMTLLL). Over 65–70 (SHRARR) the chain is Cytoplasmic. A helical transmembrane segment spans residues 71–91 (SALIFLMAIFTLGNVLSAIAP). Over 92 to 100 (DYMTLMLSR) the chain is Periplasmic. Residues 101-121 (ILTSLNHGAFFGLGSVVAASV) traverse the membrane as a helical segment. Residues 122 to 130 (VPKHKQASA) are Cytoplasmic-facing. The helical transmembrane segment at 131-151 (VATMFMGLTLANIGGVPAATW) threads the bilayer. Topologically, residues 152–159 (LGETIGWR) are periplasmic. Residues 160–180 (MSFLATAGLGVISMVSLFFSL) form a helical membrane-spanning segment. The Cytoplasmic portion of the chain corresponds to 181-203 (PKGGAGARPEVKKELAVLMRPQV). Residues 204–224 (LSALLTTVLGAGAMFTLYTYI) traverse the membrane as a helical segment. Over 225–236 (SPVLQSITHATP) the chain is Periplasmic. Residues 237–257 (VFVTAMLVLIGVGFSIGNYLG) traverse the membrane as a helical segment. Topologically, residues 258-266 (GKLADRSVN) are cytoplasmic. Residues 267–287 (GTLKGFLLLLMVIMLAIPFLA) traverse the membrane as a helical segment. The Periplasmic portion of the chain corresponds to 288–290 (RNE). A helical membrane pass occupies residues 291–311 (FGAAISMVVWGAATFAVVPPL). Topologically, residues 312-330 (QMRVMRVASEAPGLSSSVN) are cytoplasmic. A helical membrane pass occupies residues 331–351 (IGAFNLGNALGAAAGGAVISA). The Periplasmic portion of the chain corresponds to 352 to 356 (GLGYS). The chain crosses the membrane as a helical span at residues 357 to 377 (FVPVMGAIVAGLALLLVFMSA). Residues 378-389 (RKQPETVCVANS) are Cytoplasmic-facing.

Belongs to the major facilitator superfamily.

It is found in the cell inner membrane. The protein is Inner membrane transport protein YdhP (ydhP) of Escherichia coli (strain K12).